The primary structure comprises 423 residues: Protein CLP1 homolog (423 aa).

Residues E16, K57, and 119–124 (DVGKST) contribute to the ATP site.

It belongs to the Clp1 family. Clp1 subfamily.

It is found in the nucleus. Its function is as follows. Required for endonucleolytic cleavage during polyadenylation-dependent pre-mRNA 3'-end formation. This chain is Protein CLP1 homolog (cbc), found in Drosophila yakuba (Fruit fly).